A 387-amino-acid chain; its full sequence is Cytochrome b (387 aa).

8 helical membrane-spanning segments follow: residues 32-52, 76-98, 113-133, 179-199, 225-245, 290-310, 325-345, and 353-373; these read FGFF…LLAM, WLLR…VHML, LWVS…LGYV, FFSL…LHII, FTIK…AFVF, LGVL…FLTI, LFWS…QPAA, and LYST…IYMV. H82 and H96 together coordinate heme b. Residues H183 and H197 each coordinate heme b.

This sequence belongs to the cytochrome b family. In terms of assembly, the main subunits of complex b-c1 are: cytochrome b, cytochrome c1 and the Rieske protein. Heme b is required as a cofactor.

It localises to the mitochondrion inner membrane. Its function is as follows. Component of the ubiquinol-cytochrome c reductase complex (complex III or cytochrome b-c1 complex) that is part of the mitochondrial respiratory chain. The b-c1 complex mediates electron transfer from ubiquinol to cytochrome c. Contributes to the generation of a proton gradient across the mitochondrial membrane that is then used for ATP synthesis. The chain is Cytochrome b (cytB) from Dictyostelium citrinum (Slime mold).